We begin with the raw amino-acid sequence, 129 residues long: Small ribosomal subunit protein uS11 (129 aa).

Belongs to the universal ribosomal protein uS11 family. As to quaternary structure, part of the 30S ribosomal subunit. Interacts with proteins S7 and S18. Binds to IF-3.

Its function is as follows. Located on the platform of the 30S subunit, it bridges several disparate RNA helices of the 16S rRNA. Forms part of the Shine-Dalgarno cleft in the 70S ribosome. This Psychrobacter arcticus (strain DSM 17307 / VKM B-2377 / 273-4) protein is Small ribosomal subunit protein uS11.